A 116-amino-acid polypeptide reads, in one-letter code: Putative membrane protein insertion efficiency factor (116 aa).

The protein belongs to the UPF0161 family.

Its subcellular location is the cell inner membrane. Its function is as follows. Could be involved in insertion of integral membrane proteins into the membrane. In Bartonella tribocorum (strain CIP 105476 / IBS 506), this protein is Putative membrane protein insertion efficiency factor.